The following is a 174-amino-acid chain: Isomerase prhC (174 aa).

It belongs to the trt14 isomerase family. Homodimer.

It functions in the pathway secondary metabolite biosynthesis; terpenoid biosynthesis. Functionally, isomerase; part of the gene cluster that mediates the biosynthesis of paraherquonin, a meroterpenoid with a unique, highly congested hexacyclic molecular architecture. The first step of the pathway is the synthesis of 3,5-dimethylorsellinic acid (DMOA) by the polyketide synthase prhL. Synthesis of DMOA is followed by farnesylation by the prenyltransferase prhE, methylesterification by the methyl-transferase prhM, epoxidation of the prenyl chain by the flavin-dependent monooxygenase prhF, and cyclization of the farnesyl moiety by the terpene cyclase prhH, to yield the tetracyclic intermediate, protoaustinoid A. The short chain dehydrogenase prhI then oxidizes the C-3 alcohol group of the terpene cyclase product to transform protoaustinoid A into protoaustinoid B. The FAD-binding monooxygenase prhJ catalyzes the oxidation of protoaustinoid B into preaustinoid A which is further oxidized into preaustinoid A1 by FAD-binding monooxygenase phrK. Finally, prhA leads to berkeleydione via the berkeleyone B intermediate. PrhA is a multifunctional dioxygenase that first desaturates at C5-C6 to form berkeleyone B, followed by rearrangement of the A/B-ring to form the cycloheptadiene moiety in berkeleydione. Berkeleydione serves as the key intermediate for the biosynthesis of paraherquonin as well as many other meroterpenoids. The cytochrome P450 monooxygenases prhB, prhD, and prhN, as well as the isomerase prhC, are probably involved in the late stage of paraherquonin biosynthesis, after the production of berkeleydione. Especially prhC might be a multifunctional enzyme that catalyzes the D-ring expansion via intramolecular methoxy rearrangement, as well as the hydrolysis of the expanded D-ring. The chain is Isomerase prhC from Penicillium brasilianum.